A 131-amino-acid chain; its full sequence is Small ribosomal subunit protein uS11 (131 aa).

It belongs to the universal ribosomal protein uS11 family. Part of the 30S ribosomal subunit. Interacts with proteins S7 and S18. Binds to IF-3.

Located on the platform of the 30S subunit, it bridges several disparate RNA helices of the 16S rRNA. Forms part of the Shine-Dalgarno cleft in the 70S ribosome. This chain is Small ribosomal subunit protein uS11, found in Wolinella succinogenes (strain ATCC 29543 / DSM 1740 / CCUG 13145 / JCM 31913 / LMG 7466 / NCTC 11488 / FDC 602W) (Vibrio succinogenes).